A 302-amino-acid chain; its full sequence is Aquaporin NIP3-1 (302 aa).

The disordered stretch occupies residues 1 to 31 (MEPGSTPPNGSAPATPGTPAPLFSSGGPRVD). Over residues 7–21 (PPNGSAPATPGTPAP) the composition is skewed to low complexity. The next 2 helical transmembrane spans lie at 76 to 96 (LGAEFVGTFILIFFATAAPIV) and 102 to 122 (GAISPFGNAACAGLAVATVIL). The short motif at 133–135 (NPS) is the NPA 1 element. The next 3 helical transmembrane spans lie at 149 to 169 (LQVPAYVAVQALASVCAAFAL), 193 to 213 (AFFTEFIISFNLLFVVTAVAT), and 217 to 237 (AVGELAGIAVGAAVTLNILVA). The NPA 2 signature appears at 246-248 (NPV). Residues 264–284 (WIYLLAPTLGALAGASVYKAV) form a helical membrane-spanning segment.

It belongs to the MIP/aquaporin (TC 1.A.8) family. NIP (TC 1.A.8.12) subfamily.

The protein resides in the membrane. Aquaporins facilitate the transport of water and small neutral solutes across cell membranes. This is Aquaporin NIP3-1 (NIP3-1) from Zea mays (Maize).